The following is a 364-amino-acid chain: Caveolae-associated protein 4 (364 aa).

The disordered stretch occupies residues 1–24 (MEHNGSASNADKIHQNRLSSVTED). Residues 44–77 (VDSVQASQKRIEERHREMENAIKSVQIDLLKLSQ) are a coiled coil. Residues Ser-172 and Ser-173 each carry the phosphoserine modification. The stretch at 202–226 (FSKENMQKTRQNLDKKVNRIRTRIV) forms a coiled coil. A compositionally biased stretch (basic and acidic residues) spans 231–256 (RERLRQSGERLRQSGERLRQSGERFK). Disordered stretches follow at residues 231-283 (RERL…RTVA) and 311-339 (SDEL…TPEP). Tyr-326 carries the post-translational modification Phosphotyrosine. The residue at position 336 (Thr-336) is a Phosphothreonine. Ser-355 carries the post-translational modification Phosphoserine.

It belongs to the CAVIN family. In terms of assembly, component of the CAVIN complex composed of CAVIN1, CAVIN2, CAVIN3 and CAVIN4. Interacts with CAVIN1, ADRA1A and ADRA1B. Interacts with CAVIN2; this augments the transactivation of NPPA. Interacts with CAV3. Interacts with MAPK1 and MAPK3.

The protein localises to the cytoplasm. It is found in the myofibril. Its subcellular location is the sarcomere. It localises to the cytosol. The protein resides in the cell membrane. The protein localises to the sarcolemma. It is found in the membrane. Its subcellular location is the caveola. In terms of biological role, modulates the morphology of formed caveolae in cardiomyocytes, but is not required for caveolar formation. Facilitates the recruitment of MAPK1/3 to caveolae within cardiomyocytes and regulates alpha-1 adrenergic receptor-induced hypertrophic responses in cardiomyocytes through MAPK1/3 activation. Contributes to proper membrane localization and stabilization of caveolin-3 (CAV3) in cardiomyocytes. Induces RHOA activation and activates NPPA transcription and myofibrillar organization through the Rho/ROCK signaling pathway. The chain is Caveolae-associated protein 4 from Homo sapiens (Human).